A 526-amino-acid chain; its full sequence is NAD(P)H-quinone oxidoreductase chain 4 1 (526 aa).

14 helical membrane passes run 7 to 27 (FPWLSALVLLPLLAAFGIPLL), 35 to 55 (WYALAVGALDLGLMAYIFGWH), 86 to 106 (LSFPLVLLSGLITTLAIVAAW), 114 to 134 (LFFFLLLLMYGAQVGVFLAQD), 135 to 155 (LLLFFLMWEIELVPVYLLIAI), 168 to 188 (FILYTAAASIFILVGSLAMAF), 208 to 228 (ALQILAYAAFLIAFGVKLPVF), 242 to 262 (SAPISMILAGVLLKMGGYGLI), 276 to 296 (FAPVLAVLGAVNIVYGALAAL), 310 to 330 (IAHMGFVLIGIAAFTELGLNG), 331 to 351 (ALLQMISHGLIAAVLFFLTGI), 374 to 396 (AFALFTAGSLASLALPGMSGFVG), 417 to 437 (GIALLAAVGIILTPIYLLSML), and 463 to 483 (MAVALCLLLPILGIGLYPRLA).

The protein belongs to the complex I subunit 4 family.

The protein localises to the cellular thylakoid membrane. It catalyses the reaction a plastoquinone + NADH + (n+1) H(+)(in) = a plastoquinol + NAD(+) + n H(+)(out). The catalysed reaction is a plastoquinone + NADPH + (n+1) H(+)(in) = a plastoquinol + NADP(+) + n H(+)(out). NDH-1 shuttles electrons from NAD(P)H, via FMN and iron-sulfur (Fe-S) centers, to quinones in the respiratory chain. The immediate electron acceptor for the enzyme in this species is believed to be plastoquinone. Couples the redox reaction to proton translocation (for every two electrons transferred, four hydrogen ions are translocated across the cytoplasmic membrane), and thus conserves the redox energy in a proton gradient. This chain is NAD(P)H-quinone oxidoreductase chain 4 1, found in Synechococcus sp. (strain JA-3-3Ab) (Cyanobacteria bacterium Yellowstone A-Prime).